Consider the following 1135-residue polypeptide: Potassium channel subfamily T member 2 (1135 aa).

Topologically, residues methionine 1 to arginine 63 are cytoplasmic. Residues leucine 64 to glutamate 84 traverse the membrane as a helical segment. Residues asparagine 85–serine 101 lie on the Extracellular side of the membrane. Asparagine 99 carries an N-linked (GlcNAc...) asparagine glycan. Residues leucine 102–leucine 122 traverse the membrane as a helical segment. At glycine 123 to arginine 137 the chain is on the cytoplasmic side. The chain crosses the membrane as a helical span at residues isoleucine 138–serine 158. The Extracellular segment spans residues leucine 159–valine 164. The chain crosses the membrane as a helical span at residues proline 165–histidine 185. Residues arginine 186 to glutamine 198 lie on the Cytoplasmic side of the membrane. The chain crosses the membrane as a helical span at residues valine 199–histidine 219. The Extracellular segment spans residues leucine 220 to asparagine 228. The pore-forming intramembrane region spans leucine 229–threonine 249. Topologically, residues proline 250–lysine 256 are extracellular. The helical transmembrane segment at leucine 257–leucine 277 threads the bilayer. The Cytoplasmic segment spans residues alanine 278 to leucine 1135. RCK N-terminal domains lie at glutamate 299–valine 435 and asparagine 718–leucine 858. Disordered regions lie at residues valine 977–leucine 1010, tryptophan 1017–isoleucine 1036, and serine 1113–leucine 1135. Positions tryptophan 1017–glycine 1030 are enriched in basic residues. The segment covering arginine 1118–glutamine 1127 has biased composition (polar residues).

The protein belongs to the potassium channel family. Calcium-activated (TC 1.A.1.3) subfamily. KCa4.2/KCNT2 sub-subfamily. Homotetramer. Forms heteromeric channels with KCNT1; these heterodimer channels differ from the homomers in their unitary conductance, kinetic behavior, subcellular localization, and response to activation of protein kinase C. Phosphorylated by protein kinase C. Phosphorylation of the C-terminal domain inhibits channel activity.

Its subcellular location is the cell membrane. It catalyses the reaction K(+)(in) = K(+)(out). Its activity is regulated as follows. Are normally in a closed state unless activated by an increase in intracellular Na(+) and Cl(-). Inhibited upon stimulation of G-protein coupled receptors, such as CHRM1 and GRM1. There is conflicting data about the effect of ATP on KNCT2 channels activity. Intracellular ATP was initially report to inhibit the channel activity. However, others studies conclude that KNCT2 channels are not inhibited by intracellular ATP. In terms of biological role, sodium-activated and chloride-activated potassium channel. Produces rapidly activating outward rectifier K(+) currents. Contributes to regulate neuronal excitability. The polypeptide is Potassium channel subfamily T member 2 (KCNT2) (Homo sapiens (Human)).